A 549-amino-acid chain; its full sequence is Probable acyl-activating enzyme 10 (549 aa).

Belongs to the ATP-dependent AMP-binding enzyme family. Expressed at low levels in roots.

Functionally, may act as an acid--thiol ligase that activates carboxylic acids by forming acyl-CoAs. This chain is Probable acyl-activating enzyme 10 (AEE10), found in Arabidopsis thaliana (Mouse-ear cress).